The sequence spans 208 residues: Large ribosomal subunit protein bL25 (208 aa).

A disordered region spans residues 163-208 (DYSYNHEPDEVVASILPPQKQEETEAESAAQDVEEPEKGTEEEKEE). The span at 198–208 (PEKGTEEEKEE) shows a compositional bias: basic and acidic residues.

This sequence belongs to the bacterial ribosomal protein bL25 family. CTC subfamily. As to quaternary structure, part of the 50S ribosomal subunit; part of the 5S rRNA/L5/L18/L25 subcomplex. Contacts the 5S rRNA. Binds to the 5S rRNA independently of L5 and L18.

Functionally, this is one of the proteins that binds to the 5S RNA in the ribosome where it forms part of the central protuberance. The chain is Large ribosomal subunit protein bL25 from Bacillus licheniformis (strain ATCC 14580 / DSM 13 / JCM 2505 / CCUG 7422 / NBRC 12200 / NCIMB 9375 / NCTC 10341 / NRRL NRS-1264 / Gibson 46).